The sequence spans 305 residues: N-acetylmuramic acid 6-phosphate etherase (305 aa).

Residues 61–224 enclose the SIS domain; sequence ISDALAKGGR…STGAMVKLGK (164 aa). E89 (proton donor) is an active-site residue. E120 is an active-site residue.

The protein belongs to the GCKR-like family. MurNAc-6-P etherase subfamily. In terms of assembly, homodimer.

It catalyses the reaction N-acetyl-D-muramate 6-phosphate + H2O = N-acetyl-D-glucosamine 6-phosphate + (R)-lactate. It participates in amino-sugar metabolism; N-acetylmuramate degradation. Its function is as follows. Specifically catalyzes the cleavage of the D-lactyl ether substituent of MurNAc 6-phosphate, producing GlcNAc 6-phosphate and D-lactate. The sequence is that of N-acetylmuramic acid 6-phosphate etherase from Synechocystis sp. (strain ATCC 27184 / PCC 6803 / Kazusa).